The sequence spans 276 residues: Phosphonates import ATP-binding protein PhnC (276 aa).

An ABC transporter domain is found at 5–253 (IRVERLNKTF…LLNDLYGADL (249 aa)). 37–44 (GASGSGKS) lines the ATP pocket.

Belongs to the ABC transporter superfamily. Phosphonates importer (TC 3.A.1.9.1) family. As to quaternary structure, the complex is composed of two ATP-binding proteins (PhnC), two transmembrane proteins (PhnE) and a solute-binding protein (PhnD).

The protein localises to the cell inner membrane. It catalyses the reaction phosphonate(out) + ATP + H2O = phosphonate(in) + ADP + phosphate + H(+). Its function is as follows. Part of the ABC transporter complex PhnCDE involved in phosphonates import. Responsible for energy coupling to the transport system. In Stutzerimonas stutzeri (Pseudomonas stutzeri), this protein is Phosphonates import ATP-binding protein PhnC.